We begin with the raw amino-acid sequence, 295 residues long: G1/S-specific cyclin-D1 (295 aa).

One can recognise a Cyclin N-terminal domain in the interval 28 to 152 (LRAMLKAEET…VLVNKLKWNL (125 aa)). The segment at 264 to 295 (QQNLDPKAAEEEEEEEEVDLACTPTDVRDVNI) is disordered. Lysine 270 participates in a covalent cross-link: Glycyl lysine isopeptide (Lys-Gly) (interchain with G-Cter in ubiquitin). The span at 273–282 (EEEEEEEEVD) shows a compositional bias: acidic residues. Threonine 286 is subject to Phosphothreonine.

This sequence belongs to the cyclin family. Cyclin D subfamily. Interacts with either CDK4 or CDK6 protein kinase to form a serine/threonine kinase holoenzyme complex. The cyclin subunit imparts substrate specificity to the complex. Component of the ternary complex CCND1/CDK4/CDKN1B required for nuclear translocation and modulation of CDK4-mediated kinase activity. Interacts directly with CDKN1B. Can form similar complexes with either CDKN1A or CDKN2A. Interacts with UHRF2; the interaction ubiquitinates CCND1 and appears to occur independently of phosphorylation. Interacts with USP2. Interacts (via cyclin N-terminal domain) with INSM1 (via N-terminal region); the interaction competes with the binding of CCND1 to CDK4 during cell cycle progression and inhibits CDK4 activity. Interacts with CDK4; the interaction is prevented with the binding of CCND1 to INSM1 during cell cycle progression. Phosphorylation at Thr-286 by MAP kinases is required for ubiquitination and degradation by the DCX(AMBRA1) complex. It also plays an essential role for recognition by the FBXO31 component of SCF (SKP1-cullin-F-box) protein ligase complex following DNA damage. Post-translationally, ubiquitinated at Lys-270 by the DCX(AMBRA1) complex during the transition from G1 to S cell phase, leading to its degradation: ubiquitination is dependent on Thr-286 phosphorylation. The DCX(AMBRA1) complex represents the major regulator of CCND1 stability during the G1/S transition. Also ubiquitinated by the SCF(FBXO4) and Cul7-RING(FBXW8) ubiquitin-protein ligase complexes. Following DNA damage it is ubiquitinated by the SCF(FBXO31) protein ligase complex. SCF(FBXO31) ubiquitination is dependent on Thr-286 phosphorylation. Ubiquitinated also by UHRF2 apparently in a phosphorylation-independent manner. Ubiquitination leads to its degradation and G1 arrest. Deubiquitinated by USP2; leading to its stabilization.

The protein localises to the nucleus. The protein resides in the cytoplasm. It localises to the nucleus membrane. In terms of biological role, regulatory component of the cyclin D1-CDK4 (DC) complex that phosphorylates and inhibits members of the retinoblastoma (RB) protein family including RB1 and regulates the cell-cycle during G(1)/S transition. Phosphorylation of RB1 allows dissociation of the transcription factor E2F from the RB/E2F complex and the subsequent transcription of E2F target genes which are responsible for the progression through the G(1) phase. Hypophosphorylates RB1 in early G(1) phase. Cyclin D-CDK4 complexes are major integrators of various mitogenenic and antimitogenic signals. Also a substrate for SMAD3, phosphorylating SMAD3 in a cell-cycle-dependent manner and repressing its transcriptional activity. Component of the ternary complex, cyclin D1/CDK4/CDKN1B, required for nuclear translocation and activity of the cyclin D-CDK4 complex. Exhibits transcriptional corepressor activity with INSM1 on the NEUROD1 and INS promoters in a cell cycle-independent manner. The sequence is that of G1/S-specific cyclin-D1 (CCND1) from Bos taurus (Bovine).